A 646-amino-acid chain; its full sequence is EF-hand calcium-binding domain-containing protein 6 (646 aa).

6 EF-hand domains span residues 1-27, 28-63, 109-144, 214-249, 321-356, and 357-392; these read FLET…FDIP, LTPR…NYSP, DCYQ…CGCS, SSQL…FCHK, SHYH…NVQI, and LTDE…ERAA. Thr29 is subject to Phosphothreonine. The tract at residues 390-452 is disordered; sequence RAATPTATGD…TTAIPGTPPL (63 aa). Residues 432 to 446 show a composition bias toward polar residues; sequence KPQSHPCTAASTTAI. Ser435 is modified (phosphoserine). A phosphothreonine mark is found at Thr439 and Thr449. An interaction with PARK7 region spans residues 448–646; it reads GTPPLQNCDP…YNDFLRAFLQ (199 aa). EF-hand domains follow at residues 468-503, 504-539, 579-614, and 615-646; these read GCWR…FNLD, ISKE…LLKA, HCWR…YSIN, and LSEE…AFLQ. The interval 552-646 is interaction with AR; that stretch reads NAHKMKDSGA…YNDFLRAFLQ (95 aa).

In terms of assembly, microtubule inner protein component of sperm flagellar doublet microtubules. Binds PARK7. Part of a ternary complex containing PARK7, EFCAB6/DJBP and AR.

It localises to the nucleus. It is found in the cytoplasm. Its subcellular location is the cytoskeleton. The protein resides in the flagellum axoneme. In terms of biological role, negatively regulates the androgen receptor by recruiting histone deacetylase complex, and protein DJ-1 antagonizes this inhibition by abrogation of this complex. Microtubule inner protein (MIP) part of the dynein-decorated doublet microtubules (DMTs) in cilia axoneme, which is required for motile cilia beating. This chain is EF-hand calcium-binding domain-containing protein 6 (EFCAB6), found in Macaca fascicularis (Crab-eating macaque).